Here is a 430-residue protein sequence, read N- to C-terminus: Long-chain specific acyl-CoA dehydrogenase, mitochondrial (430 aa).

A mitochondrion-targeting transit peptide spans 1–30; it reads MAARLLLRSLRVLSARSATLPPPSARCSHS. At lysine 42 the chain carries N6-acetyllysine. A phosphoserine mark is found at serine 54 and serine 55. N6-acetyllysine; alternate occurs at positions 66 and 81. 2 positions are modified to N6-succinyllysine; alternate: lysine 66 and lysine 81. 2 positions are modified to N6-acetyllysine: lysine 92 and lysine 95. Residue lysine 165 is modified to N6-succinyllysine. Position 170–179 (170–179) interacts with FAD; the sequence is IAMTEPGAGS. Substrate is bound at residue serine 179. A Phosphoserine modification is found at serine 191. An FAD-binding site is contributed by 203 to 205; sequence FIT. Substrate is bound at residue 227-228; the sequence is AH. Lysine 240 carries the post-translational modification N6-succinyllysine. N6-acetyllysine; alternate occurs at positions 254 and 279. 2 positions are modified to N6-succinyllysine; alternate: lysine 254 and lysine 279. Substrate is bound by residues tyrosine 282 and 289–292; that span reads PQER. Glutamate 291 acts as the Proton acceptor in catalysis. FAD is bound at residue arginine 317. Lysine 318 is modified (N6-acetyllysine). The residue at position 322 (lysine 322) is an N6-acetyllysine; alternate. Lysine 322 carries the post-translational modification N6-succinyllysine; alternate. Glutamine 328 contributes to the FAD binding site. Position 358 is an N6-acetyllysine (lysine 358). A Phosphoserine modification is found at serine 362. Residue 385 to 389 coordinates FAD; it reads QLHGG. 412–413 lines the substrate pocket; sequence GG. 414–416 contributes to the FAD binding site; sequence TNE.

This sequence belongs to the acyl-CoA dehydrogenase family. Homotetramer. FAD is required as a cofactor. In terms of processing, acetylation at Lys-318 and Lys-322 in proximity of the cofactor-binding sites strongly reduces catalytic activity. These sites are deacetylated by SIRT3.

The protein resides in the mitochondrion matrix. The catalysed reaction is a long-chain 2,3-saturated fatty acyl-CoA + oxidized [electron-transfer flavoprotein] + H(+) = a long-chain (2E)-enoyl-CoA + reduced [electron-transfer flavoprotein]. The enzyme catalyses octanoyl-CoA + oxidized [electron-transfer flavoprotein] + H(+) = (2E)-octenoyl-CoA + reduced [electron-transfer flavoprotein]. It catalyses the reaction decanoyl-CoA + oxidized [electron-transfer flavoprotein] + H(+) = (2E)-decenoyl-CoA + reduced [electron-transfer flavoprotein]. It carries out the reaction dodecanoyl-CoA + oxidized [electron-transfer flavoprotein] + H(+) = (2E)-dodecenoyl-CoA + reduced [electron-transfer flavoprotein]. The catalysed reaction is tetradecanoyl-CoA + oxidized [electron-transfer flavoprotein] + H(+) = (2E)-tetradecenoyl-CoA + reduced [electron-transfer flavoprotein]. The enzyme catalyses oxidized [electron-transfer flavoprotein] + hexadecanoyl-CoA + H(+) = (2E)-hexadecenoyl-CoA + reduced [electron-transfer flavoprotein]. It catalyses the reaction octadecanoyl-CoA + oxidized [electron-transfer flavoprotein] + H(+) = (2E)-octadecenoyl-CoA + reduced [electron-transfer flavoprotein]. It carries out the reaction (5E)-tetradecenoyl-CoA + oxidized [electron-transfer flavoprotein] + H(+) = (2E,5E)-tetradecadienoyl-CoA + reduced [electron-transfer flavoprotein]. The catalysed reaction is (5Z)-tetradecenoyl-CoA + oxidized [electron-transfer flavoprotein] + H(+) = (2E,5Z)-tetradecadienoyl-CoA + reduced [electron-transfer flavoprotein]. The enzyme catalyses oxidized [electron-transfer flavoprotein] + (9Z)-octadecenoyl-CoA + H(+) = (2E,9Z)-octadecadienoyl-CoA + reduced [electron-transfer flavoprotein]. It catalyses the reaction hexanoyl-CoA + oxidized [electron-transfer flavoprotein] + H(+) = (2E)-hexenoyl-CoA + reduced [electron-transfer flavoprotein]. It carries out the reaction eicosanoyl-CoA + oxidized [electron-transfer flavoprotein] + H(+) = (2E)-eicosenoyl-CoA + reduced [electron-transfer flavoprotein]. The catalysed reaction is docosanoyl-CoA + oxidized [electron-transfer flavoprotein] + H(+) = (2E)-docosenoyl-CoA + reduced [electron-transfer flavoprotein]. The enzyme catalyses tetracosanoyl-CoA + oxidized [electron-transfer flavoprotein] + H(+) = (2E)-tetracosenoyl-CoA + reduced [electron-transfer flavoprotein]. It functions in the pathway lipid metabolism; mitochondrial fatty acid beta-oxidation. Its activity is regulated as follows. Inhibited by crotonyl-CoA, 2-octenoyl-CoA and 2-hexadecenoyl-CoA. In terms of biological role, long-chain specific acyl-CoA dehydrogenase is one of the acyl-CoA dehydrogenases that catalyze the first step of mitochondrial fatty acid beta-oxidation, an aerobic process breaking down fatty acids into acetyl-CoA and allowing the production of energy from fats. The first step of fatty acid beta-oxidation consists in the removal of one hydrogen from C-2 and C-3 of the straight-chain fatty acyl-CoA thioester, resulting in the formation of trans-2-enoyl-CoA. Among the different mitochondrial acyl-CoA dehydrogenases, long-chain specific acyl-CoA dehydrogenase can act on saturated and unsaturated acyl-CoAs with 6 to 24 carbons with a preference for 8 to 18 carbons long primary chains. This is Long-chain specific acyl-CoA dehydrogenase, mitochondrial from Rattus norvegicus (Rat).